Here is a 291-residue protein sequence, read N- to C-terminus: Protease HtpX (291 aa).

The next 2 membrane-spanning stretches (helical) occupy residues 4 to 24 (IVIF…LLTC) and 37 to 57 (IISG…SKFI). His-139 is a binding site for Zn(2+). Residue Glu-140 is part of the active site. Zn(2+) is bound at residue His-143. Helical transmembrane passes span 147–167 (GDMV…IFIS) and 195–215 (IVST…VLWF). A Zn(2+)-binding site is contributed by Glu-220.

This sequence belongs to the peptidase M48B family. The cofactor is Zn(2+).

The protein resides in the cell membrane. The sequence is that of Protease HtpX from Baumannia cicadellinicola subsp. Homalodisca coagulata.